Here is a 433-residue protein sequence, read N- to C-terminus: Signal recognition particle 54 kDa protein (433 aa).

Residues 106–113, 186–190, and 244–247 each bind GTP; these read GVEGSGKT, DTAGR, and TKMD.

This sequence belongs to the GTP-binding SRP family. SRP54 subfamily. Part of the signal recognition particle protein translocation system, which is composed of SRP and FtsY. Archaeal SRP consists of a 7S RNA molecule of 300 nucleotides and two protein subunits: SRP54 and SRP19.

Its subcellular location is the cytoplasm. The catalysed reaction is GTP + H2O = GDP + phosphate + H(+). Its function is as follows. Involved in targeting and insertion of nascent membrane proteins into the cytoplasmic membrane. Binds to the hydrophobic signal sequence of the ribosome-nascent chain (RNC) as it emerges from the ribosomes. The SRP-RNC complex is then targeted to the cytoplasmic membrane where it interacts with the SRP receptor FtsY. This is Signal recognition particle 54 kDa protein from Pyrobaculum arsenaticum (strain DSM 13514 / JCM 11321 / PZ6).